We begin with the raw amino-acid sequence, 236 residues long: Alpha-tubulin N-acetyltransferase (236 aa).

Residues 21–201 (ASVPDGVSRW…NKFVVFHGFF (181 aa)) enclose the N-acetyltransferase domain. Acetyl-CoA is bound by residues 134 to 147 (FYVDESCQRQGYGK) and 171 to 180 (SDKLLGFMKK). Positions 217-236 (SPTGAAAAATGTKAKNEMPG) are disordered. Low complexity predominate over residues 219 to 229 (TGAAAAATGTK).

It belongs to the acetyltransferase ATAT1 family.

The enzyme catalyses L-lysyl-[alpha-tubulin] + acetyl-CoA = N(6)-acetyl-L-lysyl-[alpha-tubulin] + CoA + H(+). Specifically acetylates 'Lys-40' in alpha-tubulin on the lumenal side of microtubules. Promotes microtubule destabilization and accelerates microtubule dynamics; this activity may be independent of acetylation activity. Acetylates alpha-tubulin with a slow enzymatic rate, due to a catalytic site that is not optimized for acetyl transfer. Enters the microtubule through each end and diffuses quickly throughout the lumen of microtubules. Acetylates only long/old microtubules because of its slow acetylation rate since it does not have time to act on dynamically unstable microtubules before the enzyme is released. The chain is Alpha-tubulin N-acetyltransferase from Leishmania braziliensis.